Consider the following 89-residue polypeptide: Small ribosomal subunit protein uS17 (89 aa).

The protein belongs to the universal ribosomal protein uS17 family. As to quaternary structure, part of the 30S ribosomal subunit.

Functionally, one of the primary rRNA binding proteins, it binds specifically to the 5'-end of 16S ribosomal RNA. This chain is Small ribosomal subunit protein uS17, found in Leptospira borgpetersenii serovar Hardjo-bovis (strain JB197).